Reading from the N-terminus, the 555-residue chain is Formate--tetrahydrofolate ligase (555 aa).

ATP is bound at residue 65-72 (TPAGEGKS).

Belongs to the formate--tetrahydrofolate ligase family.

The catalysed reaction is (6S)-5,6,7,8-tetrahydrofolate + formate + ATP = (6R)-10-formyltetrahydrofolate + ADP + phosphate. It participates in one-carbon metabolism; tetrahydrofolate interconversion. This chain is Formate--tetrahydrofolate ligase, found in Staphylococcus haemolyticus (strain JCSC1435).